Here is a 747-residue protein sequence, read N- to C-terminus: Fatty acid oxidation complex subunit alpha (747 aa).

The tract at residues 1-197 (MGASATNSVT…KMGLVDDVVP (197 aa)) is enoyl-CoA hydratase. A 3-hydroxyacyl-CoA dehydrogenase region spans residues 313–747 (RAIHRVGVLG…NIDEVTDVAS (435 aa)). The disordered stretch occupies residues 590–614 (YLYSNPTKNSSPTKNGNSPAKRNSF). The span at 593–610 (SNPTKNSSPTKNGNSPAK) shows a compositional bias: polar residues.

This sequence in the N-terminal section; belongs to the enoyl-CoA hydratase/isomerase family. It in the central section; belongs to the 3-hydroxyacyl-CoA dehydrogenase family. As to quaternary structure, heterotetramer of two alpha chains (FadJ) and two beta chains (FadI).

The protein localises to the cytoplasm. The enzyme catalyses a (3S)-3-hydroxyacyl-CoA = a (2E)-enoyl-CoA + H2O. It carries out the reaction a 4-saturated-(3S)-3-hydroxyacyl-CoA = a (3E)-enoyl-CoA + H2O. The catalysed reaction is a (3S)-3-hydroxyacyl-CoA + NAD(+) = a 3-oxoacyl-CoA + NADH + H(+). It catalyses the reaction (3S)-3-hydroxybutanoyl-CoA = (3R)-3-hydroxybutanoyl-CoA. It participates in lipid metabolism; fatty acid beta-oxidation. Its function is as follows. Catalyzes the formation of a hydroxyacyl-CoA by addition of water on enoyl-CoA. Also exhibits 3-hydroxyacyl-CoA epimerase and 3-hydroxyacyl-CoA dehydrogenase activities. This Yersinia pseudotuberculosis serotype O:1b (strain IP 31758) protein is Fatty acid oxidation complex subunit alpha.